Here is a 189-residue protein sequence, read N- to C-terminus: SAGA-associated factor 11 homolog (189 aa).

Residues 94–115 (CTCPNCDRLVAATRFAPHLEKC) form an SGF11-type zinc finger. Residues 128–189 (RRLATKEGSS…GSKKNNGKTF (62 aa)) form a disordered region. Residues 136–145 (SSASSTSTST) are compositionally biased toward low complexity. Position 165 is a phosphoserine (Ser165). The segment covering 175-189 (NSRNNGSKKNNGKTF) has biased composition (low complexity).

The protein belongs to the SGF11 family. In terms of assembly, component of some SAGA transcription coactivator-HAT complexes, at least composed of Ada2b, not/nonstop, Pcaf/Gcn5, Sgf11 and Spt3. Within the SAGA complex, Sgf11, e(y)2, and not/nonstop form an additional subcomplex of SAGA called the DUB module (deubiquitination module). Interacts directly with not/nonstop. Interacts with the AMEX complex component xmas-2. Interacts with Cbp80; important for promoter recruitment of Sgf11 that is not associated with the DUB module.

The protein resides in the nucleus. Its subcellular location is the nucleoplasm. It is found in the cytoplasm. Functionally, component of the transcription regulatory histone acetylation (HAT) complex SAGA, a multiprotein complex that activates transcription by remodeling chromatin and mediating histone acetylation and deubiquitination. Within the SAGA complex, participates in a subcomplex that specifically deubiquitinates histone H2B. The SAGA complex is recruited to specific gene promoters by activators, where it is required for transcription. Required for nuclear receptor-mediated transactivation. Binds independently on SAGA to promoters in an RNA-dependent manner. Binds to mRNA and is essential for total mRNA export from the nucleus. Required to counteract heterochromatin silencing. Controls the development of neuronal connectivity in visual system by being required for accurate axon targeting in the optic lobe. Required for expression of ecdysone-induced genes such as br/broad. In Drosophila virilis (Fruit fly), this protein is SAGA-associated factor 11 homolog.